Reading from the N-terminus, the 233-residue chain is Delta-actitoxin-Amc1a (233 aa).

The signal sequence occupies residues 1–18; the sequence is MKRIFIVALLFATCLVNA. 2 propeptides span residues 19-29 and 30-33; these read KPSINDADIKR and EPEP. P39 carries the hydroxyproline modification. 2 disulfide bridges follow: C40–C51 and C43–C58. 2 consecutive propeptides follow at residues 61–63 and 64–67; these read RKR and EPEP. The residue at position 73 (P73) is a Hydroxyproline. Disulfide bonds link C74–C85 and C77–C92. 2 consecutive propeptides follow at residues 95–97 and 98–101; these read RKR and EPEP. A Hydroxyproline modification is found at P107. Disulfide bonds link C108/C119 and C111/C126. Propeptides lie at residues 129–131 and 132–135; these read RKR and EPEP. The residue at position 141 (P141) is a Hydroxyproline. 2 disulfide bridges follow: C142–C153 and C145–C160. 2 propeptides span residues 163–165 and 166–169; these read RKR and EPEP. P175 carries the hydroxyproline modification. Disulfide bonds link C176–C187 and C179–C194. 2 consecutive propeptides follow at residues 197-199 and 200-203; these read RKR and EPEP. Hydroxyproline is present on P209. 2 cysteine pairs are disulfide-bonded: C210–C221 and C213–C228. The propeptide occupies 231-233; that stretch reads RKR.

It belongs to the sea anemone BBH family. Each Am I peptide may contain 2 disulfide bonds. In terms of processing, the precursor protein seems to be processed in the following sequence: release of the signal peptide and of the propeptide, production of six identical 34-residue peptides by cleavage between Arg and Glu, release of four N-terminal and three C-terminal residues from each peptide and hydroxylation of each Pro in position 6 of the resulting 27-residue peptides.

The protein resides in the secreted. It localises to the nematocyst. May inhibit voltage-gated sodium channels (Nav). This is Delta-actitoxin-Amc1a from Antheopsis maculata (Sea anemone).